Here is a 68-residue protein sequence, read N- to C-terminus: Protein SlyX homolog (68 aa).

Belongs to the SlyX family.

This Pseudomonas syringae pv. syringae (strain B728a) protein is Protein SlyX homolog.